The primary structure comprises 233 residues: Orotidine 5'-phosphate decarboxylase (233 aa).

Substrate contacts are provided by residues D11, K34, 61–70 (DLKLHDIPNT), T117, R179, Q188, G208, and R209. The active-site Proton donor is the K63.

This sequence belongs to the OMP decarboxylase family. Type 1 subfamily. As to quaternary structure, homodimer.

It carries out the reaction orotidine 5'-phosphate + H(+) = UMP + CO2. The protein operates within pyrimidine metabolism; UMP biosynthesis via de novo pathway; UMP from orotate: step 2/2. In terms of biological role, catalyzes the decarboxylation of orotidine 5'-monophosphate (OMP) to uridine 5'-monophosphate (UMP). The protein is Orotidine 5'-phosphate decarboxylase of Streptococcus pneumoniae (strain JJA).